A 370-amino-acid chain; its full sequence is tRNA-specific 2-thiouridylase MnmA (370 aa).

ATP-binding positions include 11–18 (GMSGGVDS) and M37. The tract at residues 97-99 (NPD) is interaction with target base in tRNA. Residue C102 is the Nucleophile of the active site. C102 and C199 are oxidised to a cystine. ATP is bound at residue G126. Residues 149 to 151 (KDQ) form an interaction with tRNA region. The active-site Cysteine persulfide intermediate is the C199. The segment at 307–308 (RY) is interaction with tRNA.

The protein belongs to the MnmA/TRMU family.

Its subcellular location is the cytoplasm. It catalyses the reaction S-sulfanyl-L-cysteinyl-[protein] + uridine(34) in tRNA + AH2 + ATP = 2-thiouridine(34) in tRNA + L-cysteinyl-[protein] + A + AMP + diphosphate + H(+). Its function is as follows. Catalyzes the 2-thiolation of uridine at the wobble position (U34) of tRNA, leading to the formation of s(2)U34. The polypeptide is tRNA-specific 2-thiouridylase MnmA (Staphylococcus haemolyticus (strain JCSC1435)).